Here is a 407-residue protein sequence, read N- to C-terminus: Multifunctional CCA protein (407 aa).

2 residues coordinate ATP: Gly8 and Arg11. The CTP site is built by Gly8 and Arg11. Residues Asp21 and Asp23 each coordinate Mg(2+). 3 residues coordinate ATP: Arg91, Arg137, and Arg140. Residues Arg91, Arg137, and Arg140 each coordinate CTP. The region spanning 225–326 (CGDHVMRVLD…LRLLKDCDAL (102 aa)) is the HD domain.

Belongs to the tRNA nucleotidyltransferase/poly(A) polymerase family. Bacterial CCA-adding enzyme type 1 subfamily. In terms of assembly, monomer. Can also form homodimers and oligomers. The cofactor is Mg(2+). It depends on Ni(2+) as a cofactor.

The enzyme catalyses a tRNA precursor + 2 CTP + ATP = a tRNA with a 3' CCA end + 3 diphosphate. The catalysed reaction is a tRNA with a 3' CCA end + 2 CTP + ATP = a tRNA with a 3' CCACCA end + 3 diphosphate. In terms of biological role, catalyzes the addition and repair of the essential 3'-terminal CCA sequence in tRNAs without using a nucleic acid template. Adds these three nucleotides in the order of C, C, and A to the tRNA nucleotide-73, using CTP and ATP as substrates and producing inorganic pyrophosphate. tRNA 3'-terminal CCA addition is required both for tRNA processing and repair. Also involved in tRNA surveillance by mediating tandem CCA addition to generate a CCACCA at the 3' terminus of unstable tRNAs. While stable tRNAs receive only 3'-terminal CCA, unstable tRNAs are marked with CCACCA and rapidly degraded. In Chromobacterium violaceum (strain ATCC 12472 / DSM 30191 / JCM 1249 / CCUG 213 / NBRC 12614 / NCIMB 9131 / NCTC 9757 / MK), this protein is Multifunctional CCA protein.